Here is a 403-residue protein sequence, read N- to C-terminus: Prostaglandin D2 receptor 2 (403 aa).

The Extracellular portion of the chain corresponds to 1 to 34; the sequence is MANITLKPLCPLLEEMVQLPNHSNSSLRYIDHVS. 3 N-linked (GlcNAc...) asparagine glycosylation sites follow: Asn3, Asn21, and Asn24. Residues 35 to 55 traverse the membrane as a helical segment; it reads VLLHGLASLLGLVENGLILFV. The Cytoplasmic portion of the chain corresponds to 56 to 71; it reads VGCRMRQTVVTTWVLH. A helical transmembrane segment spans residues 72–92; sequence LALSDLLAAASLPFFTYFLAV. Over 93–104 the chain is Extracellular; that stretch reads GHSWELGTTFCK. Residues Cys103 and Cys198 are joined by a disulfide bond. Residues 105–125 form a helical membrane-spanning segment; it reads LHSSVFFLNMFASGFLLSAIS. Residues 126–147 are Cytoplasmic-facing; sequence LDRCLQVVRPVWAQNHRTVAAA. A helical membrane pass occupies residues 148-168; that stretch reads HRVCLMLWALAVLNTVPYFVF. Residues 169-209 are Extracellular-facing; the sequence is RDTIPRRDGRIMCYYNMLLLNPGSDRDTTCDYRQKALAVSK. Residues 210 to 230 form a helical membrane-spanning segment; that stretch reads FLLAFMVPLAIIASSHVAVSL. At 231–245 the chain is on the cytoplasmic side; sequence QLHHRGRQRTGRFVR. The helical transmembrane segment at 246–266 threads the bilayer; that stretch reads LVAAIVVAFILCWGPYHIFSL. Residues 267–284 are Extracellular-facing; sequence LEARAHSVTTLRQLASRG. Residues 285–305 form a helical membrane-spanning segment; sequence LPFVTSLAFFNSVVNPLLYVL. The Cytoplasmic portion of the chain corresponds to 306-403; it reads TCPDMLHKLR…KQGSLSCTLD (98 aa). The Involved in the recycling of CRTH2 motif lies at 329–332; that stretch reads DSDL. A Phosphoserine modification is found at Ser330. Disordered stretches follow at residues 332–353 and 384–403; these read LSTG…STTT and PRRV…CTLD. Basic residues predominate over residues 338 to 348; the sequence is KRCRRRHRRRA. Ser349 bears the Phosphoserine mark. Over residues 393-403 the composition is skewed to polar residues; the sequence is EKQGSLSCTLD.

This sequence belongs to the G-protein coupled receptor 1 family. Phosphorylated.

Its subcellular location is the cell membrane. Receptor for prostaglandin D2 (PGD2). Coupled to the G(i)-protein. Receptor activation may result in pertussis toxin-sensitive decreases in cAMP levels and Ca(2+) mobilization. PI3K signaling is also implicated in mediating PTGDR2 effects. PGD2 induced receptor internalization. CRTH2 internalization can be regulated by diverse kinases such as, PKC, PKA, GRK2, GPRK5/GRK5 and GRK6. Receptor activation is responsible, at least in part, in immune regulation and allergic/inflammation responses. This Rattus norvegicus (Rat) protein is Prostaglandin D2 receptor 2 (Ptgdr2).